A 118-amino-acid polypeptide reads, in one-letter code: SPbeta prophage-derived uncharacterized protein YolB (118 aa).

This is SPbeta prophage-derived uncharacterized protein YolB (yolB) from Bacillus subtilis (strain 168).